Consider the following 706-residue polypeptide: Termination factor NPH-I homolog (706 aa).

Residues 62–227 (IGQGENTRGL…VPCFNMLSGR (166 aa)) form the Helicase ATP-binding domain. 75 to 82 (HQMGMGKT) serves as a coordination point for ATP. The short motif at 168–171 (DEAH) is the DEAH box element. One can recognise a Helicase C-terminal domain in the interval 417–599 (QCLQPLKVLE…HLNSAFRDLL (183 aa)).

This sequence belongs to the DEAD box helicase family. DEAH subfamily. Part of the viral DNA-directed RNA polymerase that consists of 8 polII-like subunits (RPB1, RPB2, RPB3, RPB5, RPB6, RPB7, RPB9, RPB10), a capping enzyme and a termination factor.

The protein localises to the virion. Putative DNA-dependent ATPase required for providing the needed energy to achieve the termination of early transcripts. The polypeptide is Termination factor NPH-I homolog (African swine fever virus (isolate Tick/South Africa/Pretoriuskop Pr4/1996) (ASFV)).